Consider the following 117-residue polypeptide: Large ribosomal subunit protein bL20 (117 aa).

It belongs to the bacterial ribosomal protein bL20 family.

Functionally, binds directly to 23S ribosomal RNA and is necessary for the in vitro assembly process of the 50S ribosomal subunit. It is not involved in the protein synthesizing functions of that subunit. The protein is Large ribosomal subunit protein bL20 of Crocosphaera subtropica (strain ATCC 51142 / BH68) (Cyanothece sp. (strain ATCC 51142)).